The primary structure comprises 197 residues: Dephospho-CoA kinase (197 aa).

Residues 3 to 197 form the DPCK domain; the sequence is VLGLTGSIGL…IDELRGQRGS (195 aa). Residue 11–16 participates in ATP binding; that stretch reads GLGKST.

The protein belongs to the CoaE family.

The protein localises to the cytoplasm. The catalysed reaction is 3'-dephospho-CoA + ATP = ADP + CoA + H(+). It functions in the pathway cofactor biosynthesis; coenzyme A biosynthesis; CoA from (R)-pantothenate: step 5/5. Catalyzes the phosphorylation of the 3'-hydroxyl group of dephosphocoenzyme A to form coenzyme A. In Mesorhizobium japonicum (strain LMG 29417 / CECT 9101 / MAFF 303099) (Mesorhizobium loti (strain MAFF 303099)), this protein is Dephospho-CoA kinase.